The chain runs to 260 residues: Global transcriptional regulator CodY (260 aa).

Residues 1–159 (MPNLLQKTRK…SSTVVGIQLL (159 aa)) are GAF domain. Positions 207–226 (ASVIADRIGITRSVIVNALR) form a DNA-binding region, H-T-H motif.

This sequence belongs to the CodY family.

Its subcellular location is the cytoplasm. In terms of biological role, DNA-binding global transcriptional regulator which is involved in the adaptive response to starvation and acts by directly or indirectly controlling the expression of numerous genes in response to nutrient availability. During rapid exponential growth, CodY is highly active and represses genes whose products allow adaptation to nutrient depletion. This is Global transcriptional regulator CodY from Streptococcus equi subsp. zooepidemicus (strain MGCS10565).